Consider the following 613-residue polypeptide: Probable inactive purple acid phosphatase 1 (613 aa).

The first 24 residues, 1-24 (MRESLVAILVTVISVLGAIHQVKS), serve as a signal peptide directing secretion. N-linked (GlcNAc...) asparagine glycans are attached at residues asparagine 89 and asparagine 116. Residue aspartate 295 participates in Fe cation binding. The N-linked (GlcNAc...) asparagine glycan is linked to asparagine 316. Fe cation contacts are provided by aspartate 336 and tyrosine 339. Zn(2+) is bound at residue aspartate 336. 3 residues coordinate Zn(2+): asparagine 369, histidine 458, and histidine 500. A substrate-binding site is contributed by asparagine 369. A substrate-binding site is contributed by 500–502 (HAH). Histidine 502 is a Fe cation binding site. Residues asparagine 528 and asparagine 551 are each glycosylated (N-linked (GlcNAc...) asparagine).

The protein belongs to the metallophosphoesterase superfamily. Purple acid phosphatase family. As to quaternary structure, homodimer. Requires Fe cation as cofactor. Zn(2+) serves as cofactor. As to expression, expressed in roots, stems, leaves, flowers and siliques.

It is found in the secreted. The sequence is that of Probable inactive purple acid phosphatase 1 (PAP1) from Arabidopsis thaliana (Mouse-ear cress).